The following is a 376-amino-acid chain: Coatomer subunit delta-4 (376 aa).

Residues 65–92 (LNTDTDTFTSRPKGRTSGGTTGAGKGIG) are disordered. Over residues 80 to 92 (TSGGTTGAGKGIG) the composition is skewed to gly residues. Positions 134–376 (SDPVTVAVEE…RLVADNYQVV (243 aa)) constitute an MHD domain.

This sequence belongs to the adaptor complexes medium subunit family. Delta-COP subfamily. As to quaternary structure, oligomeric complex that consists of at least the alpha, beta, beta', gamma, delta, epsilon and zeta subunits.

Its subcellular location is the cytoplasm. It is found in the golgi apparatus membrane. The protein localises to the cytoplasmic vesicle. It localises to the COPI-coated vesicle membrane. The coatomer is a cytosolic protein complex that binds to dilysine motifs and reversibly associates with Golgi non-clathrin-coated vesicles, which further mediate biosynthetic protein transport from the ER, via the Golgi up to the trans Golgi network. Coatomer complex is required for budding from Golgi membranes, and is essential for the retrograde Golgi-to-ER transport of dilysine-tagged proteins. This chain is Coatomer subunit delta-4, found in Oryza sativa subsp. japonica (Rice).